Here is a 1619-residue protein sequence, read N- to C-terminus: Rap-GAP domain-containing protein DDB_G0281809 (1619 aa).

4 disordered regions span residues 128–249 (SMSN…TTPI), 289–316 (QQQQQQSPSITTGTVKGSKYRESVMPGS), 907–974 (SIGG…PYIN), and 1134–1153 (ISNNNTTTTSNNSIKSTSNN). Composition is skewed to low complexity over residues 130-204 (SNNN…SLSL) and 231-249 (QISATTTAATSPTTPTTPI). The stretch at 265–295 (FNEVVQQQQQQQQQQQQQQQQQQQQQQQQQS) forms a coiled coil. Composition is skewed to low complexity over residues 916-926 (SGNSSQPSSTG) and 934-965 (SGSKSNSSSSSSSQPSSTGGSGNNSNSANGGS). Residues 1273–1494 (LNMLDSVSER…TNRKKLISDI (222 aa)) enclose the Rap-GAP domain. The segment at 1554–1619 (IGTFTLPPPP…LSQSEDQSHK (66 aa)) is disordered. Residues 1559-1573 (LPPPPISPTISPQPS) are compositionally biased toward pro residues. The span at 1574-1590 (PHLSSSGGSWASSKGGS) shows a compositional bias: low complexity. A compositionally biased stretch (polar residues) spans 1591-1619 (TQPTTPSGRTSNFLSRRPNLSQSEDQSHK).

This is Rap-GAP domain-containing protein DDB_G0281809 from Dictyostelium discoideum (Social amoeba).